Reading from the N-terminus, the 1130-residue chain is MSRSPRPHGTHEPAVGVTRPFVRQSHPEIAAWPAPPPAHQLGCLSGNVRTPVGGPAPPSPVLRRAPSGPISPSPISPVSQHSRASSRHDIDNTSLLSILKLSHVARESSRNTSRNNSPQPAGRETELKRKIQTLEETVAEYERQKYNVMGTFSEYRERVAERERKLEAEYSGKIIALSEEVLGAKKDFEARMKSFQALQDKFEREKEQALEKLRKEHQKEIQVLEQRFSDTQLLNLEQKYIIEIQRLEEERKSLRTEKERLGETFEMKLRRAQSLYETELTAAKMLYTKELEALRDHEEALKEELLARQDEFHDRLQELQLQSKRSREDLVSCKNDVTALEKKLHNKEKEVQTLTKELDQVKTETNDKIRRLTEVTSEFAEYRKKFQQQEEELRRKARLLTVVEAAKEKLESVISDLQVEVKALKNKVEFLEKERENLQSQSESQTQLQSSQVDALEAVLHSVTKEKETTKEHYEGLLLKERQQAESREHAMKKEFSCKLNELEEQYTSLKEELEESARLDKDELREASEIEIQALRTEKSILAAEIRVLTQKIEDEEQDDITEQLAKIVEDTSQLTRTLEEYRERITGKDAEILNLRKQLEKEISHTEDRNRLLHENTQKELEAHKETHTETVRVLEAEIDQFKSAFENEQEYGKEKSAKIRELEAQNKTLLSEMEKVKHVAENLEAFTSDKDNLLEELESKNKNIEHLKQEIAQLNEKISTKETEKDSELEKTIAQLEIDNSSKSDQIEKLHLRVNDMLDQMGTIKDELVKKNEEIKTISAKTAQLLESNTVESETKLASVTEEREKEIQSFQTQISEKDNEVLTKAERINELETCLKEREVELTGMRTKLDDMTQQLNEETTVVLFDNSIQEKIDEKEATINEMNERLKSRENEIAKLHEEMYMQKTQNEKRNEEQSKLFQELMFEKEQLEAEKAEQSHIEAEVEQVFQADKESKWKEQIEDLENALQRKNELIQQLQDRQTDESTSEPHTKKRMSITSHGVFQNFVSQMKDKREEASEKRTRKEAEKKAEKEKEKAEKAAKEAAKELAREKSPARAKSPSILTRLRDRSPAKSKSDNLESTPSSSSRNLLSPFDAEKRMERSSPSQQLFSRTKKDSSSEKRPAWKF.

3 disordered regions span residues 1-92 (MSRS…DIDN), 104-129 (VARE…ELKR), and 974-1130 (NELI…AWKF). Coiled-coil stretches lie at residues 121-779 (AGRE…EEIK) and 805-1061 (EERE…ARAK). Residues 983–993 (RQTDESTSEPH) show a composition bias toward basic and acidic residues. A compositionally biased stretch (polar residues) spans 999-1011 (SITSHGVFQNFVS). Composition is skewed to basic and acidic residues over residues 1013 to 1057 (MKDK…EKSP) and 1068 to 1081 (RLRD…KSDN). Low complexity predominate over residues 1082–1095 (LESTPSSSSRNLLS). Basic and acidic residues predominate over residues 1116–1130 (TKKDSSSEKRPAWKF).

This is Putative protein tag-278 (tag-278) from Caenorhabditis elegans.